The primary structure comprises 510 residues: Histidine ammonia-lyase (510 aa).

Positions 143–145 (ASG) form a cross-link, 5-imidazolinone (Ala-Gly). S144 carries the 2,3-didehydroalanine (Ser) modification.

Belongs to the PAL/histidase family. In terms of processing, contains an active site 4-methylidene-imidazol-5-one (MIO), which is formed autocatalytically by cyclization and dehydration of residues Ala-Ser-Gly.

Its subcellular location is the cytoplasm. It carries out the reaction L-histidine = trans-urocanate + NH4(+). The protein operates within amino-acid degradation; L-histidine degradation into L-glutamate; N-formimidoyl-L-glutamate from L-histidine: step 1/3. The chain is Histidine ammonia-lyase from Photobacterium profundum (strain SS9).